The following is a 203-amino-acid chain: Peptidyl-tRNA hydrolase (203 aa).

Tyrosine 14 lines the tRNA pocket. Histidine 19 acts as the Proton acceptor in catalysis. Residues tyrosine 64, asparagine 66, and asparagine 112 each coordinate tRNA.

Belongs to the PTH family. As to quaternary structure, monomer.

The protein localises to the cytoplasm. It catalyses the reaction an N-acyl-L-alpha-aminoacyl-tRNA + H2O = an N-acyl-L-amino acid + a tRNA + H(+). Functionally, hydrolyzes ribosome-free peptidyl-tRNAs (with 1 or more amino acids incorporated), which drop off the ribosome during protein synthesis, or as a result of ribosome stalling. In terms of biological role, catalyzes the release of premature peptidyl moieties from peptidyl-tRNA molecules trapped in stalled 50S ribosomal subunits, and thus maintains levels of free tRNAs and 50S ribosomes. In Methylobacterium nodulans (strain LMG 21967 / CNCM I-2342 / ORS 2060), this protein is Peptidyl-tRNA hydrolase.